The chain runs to 507 residues: (6-4) photolyase (507 aa).

Residues glycine 9–aspartate 10, cysteine 32–tyrosine 40, and glycine 105 contribute to the 6,7-dimethyl-8-(1-D-ribityl)lumazine site. FAD-binding positions include histidine 265–serine 269 and asparagine 273. Residue cysteine 350 participates in [4Fe-4S] cluster binding. Residues tyrosine 363–histidine 366, aspartate 397, and asparagine 406 contribute to the FAD site. [4Fe-4S] cluster-binding residues include cysteine 438, cysteine 441, and cysteine 454.

The protein belongs to the iron-sulfur bacterial cryptochrome/photolyase (FeS-BCP) family. It depends on FAD as a cofactor. Requires 6,7-dimethyl-8-(1-D-ribityl)lumazine as cofactor. The cofactor is [4Fe-4S] cluster.

The enzyme catalyses (6-4) photoproduct (in DNA) = 2 pyrimidine residues (in DNA).. Photolyase involved in the repair of UV-induced (6-4) lesions in DNA. Catalyzes the photoreactivation of (6-4) pyrimidine-pyrimidone photoproducts by using blue-light energy. Can repair (6-4) photoproducts in ssDNA as well as in dsDNA. This chain is (6-4) photolyase, found in Agrobacterium fabrum (strain C58 / ATCC 33970) (Agrobacterium tumefaciens (strain C58)).